A 124-amino-acid polypeptide reads, in one-letter code: Protein YebF (124 aa).

Positions 1 to 27 (MKTCHIINRVGLSGVALLLTVSFTVSA) are cleaved as a signal peptide. The 88-residue stretch at 36 to 123 (KFISCDNLTK…QQNTISYSEL (88 aa)) folds into the YebF/Cmi domain. Cysteines 40 and 113 form a disulfide.

This sequence belongs to the YebF family.

The protein resides in the secreted. The polypeptide is Protein YebF (Photorhabdus laumondii subsp. laumondii (strain DSM 15139 / CIP 105565 / TT01) (Photorhabdus luminescens subsp. laumondii)).